A 90-amino-acid chain; its full sequence is U7-theraphotoxin-Hhn1i (90 aa).

Residues Met1–Ser19 form the signal peptide. A propeptide spanning residues Phe20–Glu50 is cleaved from the precursor. 3 disulfide bridges follow: Cys51–Cys65, Cys58–Cys70, and Cys64–Cys81.

This sequence belongs to the neurotoxin 10 (Hwtx-1) family. 13 (Hntx-13) subfamily. Expressed by the venom gland.

The protein localises to the secreted. Its function is as follows. Ion channel inhibitor. In Cyriopagopus hainanus (Chinese bird spider), this protein is U7-theraphotoxin-Hhn1i.